The following is a 231-amino-acid chain: Large ribosomal subunit protein uL1 (231 aa).

The protein belongs to the universal ribosomal protein uL1 family. As to quaternary structure, part of the 50S ribosomal subunit.

Functionally, binds directly to 23S rRNA. The L1 stalk is quite mobile in the ribosome, and is involved in E site tRNA release. Protein L1 is also a translational repressor protein, it controls the translation of the L11 operon by binding to its mRNA. This Nitrosomonas eutropha (strain DSM 101675 / C91 / Nm57) protein is Large ribosomal subunit protein uL1.